The primary structure comprises 80 residues: Large ribosomal subunit protein bL31B (80 aa).

Belongs to the bacterial ribosomal protein bL31 family. Type B subfamily. In terms of assembly, part of the 50S ribosomal subunit.

This Xanthomonas campestris pv. campestris (strain 8004) protein is Large ribosomal subunit protein bL31B.